The primary structure comprises 723 residues: Pentatricopeptide repeat-containing protein At5g50280, chloroplastic (723 aa).

The transit peptide at 1–44 directs the protein to the chloroplast; it reads MSMASSSLATQSFFSSFPLSHRLHFPVPYLLLRSSFFRKPLSLS. Residues 70–97 form a disordered region; the sequence is IQQPENSTINSEESECEEEDDEEGDDFT. Residues 81 to 97 are compositionally biased toward acidic residues; it reads EESECEEEDDEEGDDFT. 11 PPR repeats span residues 272–306, 307–342, 343–377, 378–412, 413–447, 448–483, 484–518, 519–553, 554–588, 589–623, and 624–658; these read DVRLYNAAISGLSASQRYDDAWEVYEAMDKINVYP, DNVTCAILITTLRKAGRSAKEVWEIFEKMSEKGVKW, SQDVFGGLVKSFCDEGLKEEALVIQTEMEKKGIRS, NTIVYNTLMDAYNKSNHIEEVEGLFTEMRDKGLKP, SAATYNILMDAYARRMQPDIVETLLREMEDLGLEP, NVKSYTCLISAYGRTKKMSDMAADAFLRMKKVGLKP, SSHSYTALIHAYSVSGWHEKAYASFEEMCKEGIKP, SVETYTSVLDAFRRSGDTGKLMEIWKLMLREKIKG, TRITYNTLLDGFAKQGLYIEARDVVSEFSKMGLQP, SVMTYNMLMNAYARGGQDAKLPQLLKEMAALNLKP, and DSITYSTMIYAFVRVRDFKRAFFYHKMMVKSGQVP. The tract at residues 700–723 is disordered; that stretch reads TKGKKDEFWKYKTNRTTSPGRHRS. The segment covering 713–723 has biased composition (polar residues); sequence NRTTSPGRHRS.

It belongs to the PPR family. P subfamily.

It localises to the plastid. The protein localises to the chloroplast. In Arabidopsis thaliana (Mouse-ear cress), this protein is Pentatricopeptide repeat-containing protein At5g50280, chloroplastic (EMB1006).